We begin with the raw amino-acid sequence, 175 residues long: MMTYIVFILSVIFVVSFVGFSSKPSPIYGGLVLIVSGGVGCGIIMNFGGSFLGLMVFLIYLGGMLVVFGYTTAMATEQYPEVWVSNTTVMGVFLLGLLMEVMLVLYVLKSEEVGVVFKFSGVGAWAIYDTGDSGAFSEEIMGAAALYSYGAWVVIVTGWSLLVGVLVILEVTRGD.

Helical transmembrane passes span 1-21 (MMTYIVFILSVIFVVSFVGFS), 25-45 (SPIYGGLVLIVSGGVGCGIIM), 47-67 (FGGSFLGLMVFLIYLGGMLVV), 88-108 (TVMGVFLLGLLMEVMLVLYVL), and 149-169 (YGAWVVIVTGWSLLVGVLVIL).

The protein belongs to the complex I subunit 6 family. As to quaternary structure, core subunit of respiratory chain NADH dehydrogenase (Complex I) which is composed of 45 different subunits.

The protein localises to the mitochondrion inner membrane. The catalysed reaction is a ubiquinone + NADH + 5 H(+)(in) = a ubiquinol + NAD(+) + 4 H(+)(out). In terms of biological role, core subunit of the mitochondrial membrane respiratory chain NADH dehydrogenase (Complex I) which catalyzes electron transfer from NADH through the respiratory chain, using ubiquinone as an electron acceptor. Essential for the catalytic activity and assembly of complex I. The polypeptide is NADH-ubiquinone oxidoreductase chain 6 (MT-ND6) (Equus caballus (Horse)).